A 269-amino-acid polypeptide reads, in one-letter code: Hdr-like menaquinol oxidoreductase iron-sulfur subunit 1 (269 aa).

The tat-type signal signal peptide spans 1-26 (MMSRRKFLLLTGAAAAGAILTPQISA). [4Fe-4S] cluster-binding residues include C52, C55, C72, C76, C118, C121, C126, C130, C150, C153, C156, C160, C194, C197, C215, and C219. Residues 141-170 (GIVEIDMHRCIGCRYCMIACPYGARCFNFI) form the 4Fe-4S ferredoxin-type domain.

Consists of five subunits: an integral membrane subunit, a cytochrome b-like subunit, a cytochrome c subunit and two iron-sulfur subunits. The cofactor is [4Fe-4S] cluster. Post-translationally, predicted to be exported by the Tat system. The position of the signal peptide cleavage has been experimentally proven.

The protein localises to the cell membrane. In terms of biological role, has menaquinol-oxidizing activity. HmeA, HmeB and HmeE subunits may together catalyze electron transfer from menaquinol to cytochrome c. This Archaeoglobus fulgidus (strain ATCC 49558 / DSM 4304 / JCM 9628 / NBRC 100126 / VC-16) protein is Hdr-like menaquinol oxidoreductase iron-sulfur subunit 1 (hmeA).